A 66-amino-acid chain; its full sequence is Rho-elapitoxin-Da1b (66 aa).

Intrachain disulfides connect Cys3–Cys24, Cys17–Cys42, Cys46–Cys58, and Cys59–Cys64.

This sequence belongs to the three-finger toxin family. Short-chain subfamily. Aminergic toxin sub-subfamily. As to expression, expressed by the venom gland.

It localises to the secreted. Functionally, non-competitive antagonist of alpha-2 adrenergic receptors (ADRA2) in smooth muscles, and partial antagonist of D3 dopamine receptors (DRD3) (inhibits 25% of methylspiperone binding to this receptor). Also shows a low antagonism on D2 dopamine receptors (DRD2) (short isoform). Shows high affinity to adrenergic receptors (Ki=14 nM (ADRA2A), Ki=73 nM (ADRA2B), and Ki=38 nM (ADRA2C)). Increases heart rate and blood catecholamine concentrations. This chain is Rho-elapitoxin-Da1b, found in Dendroaspis angusticeps (Eastern green mamba).